The following is a 440-amino-acid chain: tRNA modification GTPase MnmE (440 aa).

3 residues coordinate (6S)-5-formyl-5,6,7,8-tetrahydrofolate: R23, E80, and K120. The TrmE-type G domain maps to 217–366 (GLKIVIAGEP…LLAMLQAHLP (150 aa)). N227 is a K(+) binding site. GTP is bound by residues 227-232 (NAGKSS), 246-252 (TEIAGTT), and 271-274 (DTAG). S231 serves as a coordination point for Mg(2+). K(+) contacts are provided by T246, I248, and T251. Residue T252 coordinates Mg(2+). K440 contacts (6S)-5-formyl-5,6,7,8-tetrahydrofolate.

This sequence belongs to the TRAFAC class TrmE-Era-EngA-EngB-Septin-like GTPase superfamily. TrmE GTPase family. Homodimer. Heterotetramer of two MnmE and two MnmG subunits. K(+) serves as cofactor.

Its subcellular location is the cytoplasm. Exhibits a very high intrinsic GTPase hydrolysis rate. Involved in the addition of a carboxymethylaminomethyl (cmnm) group at the wobble position (U34) of certain tRNAs, forming tRNA-cmnm(5)s(2)U34. This Sinorhizobium medicae (strain WSM419) (Ensifer medicae) protein is tRNA modification GTPase MnmE.